We begin with the raw amino-acid sequence, 205 residues long: Large ribosomal subunit protein uL3 (205 aa).

Belongs to the universal ribosomal protein uL3 family. As to quaternary structure, part of the 50S ribosomal subunit. Forms a cluster with proteins L14 and L19.

Its function is as follows. One of the primary rRNA binding proteins, it binds directly near the 3'-end of the 23S rRNA, where it nucleates assembly of the 50S subunit. The chain is Large ribosomal subunit protein uL3 from Porphyromonas gingivalis (strain ATCC 33277 / DSM 20709 / CIP 103683 / JCM 12257 / NCTC 11834 / 2561).